Reading from the N-terminus, the 166-residue chain is NADPH-dependent 7-cyano-7-deazaguanine reductase (166 aa).

Cysteine 57 (thioimide intermediate) is an active-site residue. Catalysis depends on aspartate 64, which acts as the Proton donor. Substrate contacts are provided by residues valine 79–serine 81 and histidine 98–glutamate 99.

Belongs to the GTP cyclohydrolase I family. QueF type 1 subfamily.

It localises to the cytoplasm. It carries out the reaction 7-aminomethyl-7-carbaguanine + 2 NADP(+) = 7-cyano-7-deazaguanine + 2 NADPH + 3 H(+). The protein operates within tRNA modification; tRNA-queuosine biosynthesis. Catalyzes the NADPH-dependent reduction of 7-cyano-7-deazaguanine (preQ0) to 7-aminomethyl-7-deazaguanine (preQ1). The sequence is that of NADPH-dependent 7-cyano-7-deazaguanine reductase from Staphylococcus saprophyticus subsp. saprophyticus (strain ATCC 15305 / DSM 20229 / NCIMB 8711 / NCTC 7292 / S-41).